The sequence spans 101 residues: Small ribosomal subunit protein uS17 (101 aa).

Belongs to the universal ribosomal protein uS17 family. As to quaternary structure, part of the 30S ribosomal subunit.

One of the primary rRNA binding proteins, it binds specifically to the 5'-end of 16S ribosomal RNA. The chain is Small ribosomal subunit protein uS17 from Koribacter versatilis (strain Ellin345).